Here is a 489-residue protein sequence, read N- to C-terminus: MAAVTQFLSQPSSIRGTLNQYQLNQTSLSRIPFLSLKSTLKPLKRLSVKAAVSQNSTKTLTKESASSFDHCFKKSSDGFLYCEGTKVQDIMETVEKRPFYLYSKPQITRNLEAYKEALEGVRSVIGYAIKANNNLKILEHLRSLGCGAVLVSGNELRLALLAGFDPTKCIFNGNGKSLEDLVLAAQEGVFVNVDSEFDLNNIVEASRISGKQVNVLLRINPDVDPQVHPYVATGNKNSKFGIRNEKLQWFLDEVKAHPKELKLVGAHCHLGSTITKVDIFRDAAVLMIEYIDEIRRQGFEVSYLNIGGGLGIDYYHAGAVLPTPMDLINTVRELVLSRDLNLIIEPGRSLIANTCCFVNHVTGVKTNGTKNFIVIDGSMAELIRPSLYDAYQHIELVSPTPPEAEVTKFDVVGPVCESADFLGKDRELPTPPQGAGLVVHDAGAYCMSMASTYNLKMRPPEYWVEEDGSITKIRHAETFDDHLRFFEGL.

The N-terminal 50 residues, 1–50 (MAAVTQFLSQPSSIRGTLNQYQLNQTSLSRIPFLSLKSTLKPLKRLSVKA), are a transit peptide targeting the chloroplast. A51 is modified (N-acetylalanine). K130 is subject to N6-(pyridoxal phosphate)lysine. Residues G309 and 345–348 (EPGR) each bind pyridoxal 5'-phosphate. 3 residues coordinate substrate: R348, R384, and Y388. C416 (proton donor) is an active-site residue. Residues E417 and Y445 each contribute to the substrate site. Position 445 (Y445) interacts with pyridoxal 5'-phosphate.

The protein belongs to the Orn/Lys/Arg decarboxylase class-II family. LysA subfamily. As to quaternary structure, homodimer. Pyridoxal 5'-phosphate is required as a cofactor.

It is found in the plastid. The protein localises to the chloroplast. It catalyses the reaction meso-2,6-diaminopimelate + H(+) = L-lysine + CO2. Its pathway is amino-acid biosynthesis; L-lysine biosynthesis via DAP pathway; L-lysine from DL-2,6-diaminopimelate: step 1/1. Its function is as follows. Specifically catalyzes the decarboxylation of meso-diaminopimelate (meso-DAP) to L-lysine. The polypeptide is Diaminopimelate decarboxylase 2, chloroplastic (LYSA2) (Arabidopsis thaliana (Mouse-ear cress)).